The chain runs to 558 residues: Methionine--tRNA ligase 1 (558 aa).

Residues 10–20 carry the 'HIGH' region motif; the sequence is PYINGIKHLGN. 4 residues coordinate Zn(2+): C142, C145, C155, and C158. The 'KMSKS' region motif lies at 332–336; sequence KFSTS. T335 lines the ATP pocket.

Belongs to the class-I aminoacyl-tRNA synthetase family. MetG type 1 subfamily. Monomer. The cofactor is Zn(2+).

Its subcellular location is the cytoplasm. The catalysed reaction is tRNA(Met) + L-methionine + ATP = L-methionyl-tRNA(Met) + AMP + diphosphate. Functionally, is required not only for elongation of protein synthesis but also for the initiation of all mRNA translation through initiator tRNA(fMet) aminoacylation. The protein is Methionine--tRNA ligase 1 of Acaryochloris marina (strain MBIC 11017).